The primary structure comprises 251 residues: Ubiquinone/menaquinone biosynthesis C-methyltransferase UbiE (251 aa).

Residues threonine 74, aspartate 95, and 123-124 (NA) contribute to the S-adenosyl-L-methionine site.

The protein belongs to the class I-like SAM-binding methyltransferase superfamily. MenG/UbiE family.

The enzyme catalyses a 2-demethylmenaquinol + S-adenosyl-L-methionine = a menaquinol + S-adenosyl-L-homocysteine + H(+). The catalysed reaction is a 2-methoxy-6-(all-trans-polyprenyl)benzene-1,4-diol + S-adenosyl-L-methionine = a 5-methoxy-2-methyl-3-(all-trans-polyprenyl)benzene-1,4-diol + S-adenosyl-L-homocysteine + H(+). The protein operates within quinol/quinone metabolism; menaquinone biosynthesis; menaquinol from 1,4-dihydroxy-2-naphthoate: step 2/2. It participates in cofactor biosynthesis; ubiquinone biosynthesis. Methyltransferase required for the conversion of demethylmenaquinol (DMKH2) to menaquinol (MKH2) and the conversion of 2-polyprenyl-6-methoxy-1,4-benzoquinol (DDMQH2) to 2-polyprenyl-3-methyl-6-methoxy-1,4-benzoquinol (DMQH2). This is Ubiquinone/menaquinone biosynthesis C-methyltransferase UbiE from Pseudoalteromonas translucida (strain TAC 125).